The primary structure comprises 84 residues: ATP synthase subunit c (84 aa).

A run of 2 helical transmembrane segments spans residues 9–29 (IIGA…GFAI) and 54–74 (IVAG…LLFI).

It belongs to the ATPase C chain family. F-type ATPases have 2 components, F(1) - the catalytic core - and F(0) - the membrane proton channel. F(1) has five subunits: alpha(3), beta(3), gamma(1), delta(1), epsilon(1). F(0) has three main subunits: a(1), b(2) and c(10-14). The alpha and beta chains form an alternating ring which encloses part of the gamma chain. F(1) is attached to F(0) by a central stalk formed by the gamma and epsilon chains, while a peripheral stalk is formed by the delta and b chains.

The protein localises to the cell inner membrane. Functionally, f(1)F(0) ATP synthase produces ATP from ADP in the presence of a proton or sodium gradient. F-type ATPases consist of two structural domains, F(1) containing the extramembraneous catalytic core and F(0) containing the membrane proton channel, linked together by a central stalk and a peripheral stalk. During catalysis, ATP synthesis in the catalytic domain of F(1) is coupled via a rotary mechanism of the central stalk subunits to proton translocation. In terms of biological role, key component of the F(0) channel; it plays a direct role in translocation across the membrane. A homomeric c-ring of between 10-14 subunits forms the central stalk rotor element with the F(1) delta and epsilon subunits. The sequence is that of ATP synthase subunit c from Haemophilus ducreyi (strain 35000HP / ATCC 700724).